The primary structure comprises 534 residues: Phosphoenolpyruvate carboxykinase (ATP) (534 aa).

Arginine 59, tyrosine 200, and lysine 206 together coordinate substrate. ATP-binding positions include lysine 206, histidine 225, and 242–250; that span reads GLSGTGKTT. Lysine 206 and histidine 225 together coordinate Mn(2+). A Mn(2+)-binding site is contributed by aspartate 263. ATP contacts are provided by residues glutamate 291, arginine 327, 443–444, and threonine 449; that span reads RI. Arginine 327 lines the substrate pocket.

This sequence belongs to the phosphoenolpyruvate carboxykinase (ATP) family. Mn(2+) is required as a cofactor.

The protein localises to the cytoplasm. The enzyme catalyses oxaloacetate + ATP = phosphoenolpyruvate + ADP + CO2. Its pathway is carbohydrate biosynthesis; gluconeogenesis. Its function is as follows. Involved in the gluconeogenesis. Catalyzes the conversion of oxaloacetate (OAA) to phosphoenolpyruvate (PEP) through direct phosphoryl transfer between the nucleoside triphosphate and OAA. The protein is Phosphoenolpyruvate carboxykinase (ATP) of Lachnospira eligens (strain ATCC 27750 / DSM 3376 / VPI C15-48 / C15-B4) (Eubacterium eligens).